A 599-amino-acid chain; its full sequence is Kelch-like protein 41a (599 aa).

In terms of domain architecture, BTB spans 32 to 102 (VDCILKVGDR…LYSADIDITD (71 aa)). A BACK domain is found at 137–239 (CLAIFRMGLV…PEKYLKEKVE (103 aa)). 5 Kelch repeats span residues 339 to 391 (LLYV…EFEN), 393 to 440 (LFAV…SQNG), 441 to 488 (LVYC…VHKG), 489 to 535 (KIVV…SVDG), and 537 to 591 (LYAV…SMRL).

Its subcellular location is the cytoplasm. It localises to the cytoskeleton. The protein localises to the sarcoplasmic reticulum membrane. It is found in the endoplasmic reticulum membrane. Involved in skeletal muscle development and differentiation. The chain is Kelch-like protein 41a (klhl41a) from Danio rerio (Zebrafish).